The primary structure comprises 1554 residues: Mediator of RNA polymerase II transcription subunit 12 (1554 aa).

2 disordered regions span residues 1-73 (MASL…TKRQ) and 128-173 (QGSL…VNQN). Residues 13-26 (SSRPSMSCGNSSSS) show a composition bias toward low complexity. Positions 32-42 (GHSQRPSQTDP) are enriched in polar residues.

It belongs to the Mediator complex subunit 12 family. In terms of assembly, component of the SRB8-11 complex, which itself associates with the Mediator complex.

It localises to the nucleus. Functionally, component of the SRB8-11 complex. The SRB8-11 complex is a regulatory module of the Mediator complex which is itself involved in regulation of basal and activated RNA polymerase II-dependent transcription. The SRB8-11 complex may be involved in the transcriptional repression of a subset of genes regulated by Mediator. It may inhibit the association of the Mediator complex with RNA polymerase II to form the holoenzyme complex. The protein is Mediator of RNA polymerase II transcription subunit 12 (SRB8) of Coccidioides immitis (strain RS) (Valley fever fungus).